A 305-amino-acid polypeptide reads, in one-letter code: Heme A synthase (305 aa).

Residues 1–6 (MKKFLK) lie on the Cytoplasmic side of the membrane. The helical transmembrane segment at 7-27 (VWSVLTIICMTVVVFGGALVT) threads the bilayer. The Extracellular segment spans residues 28–63 (KTGSADGCGNSWPLCNGQLVRLTDVTPEKLIEFMHR). A disulfide bridge connects residues cysteine 35 and cysteine 42. Glutamate 59 is an active-site residue. Histidine 62 contributes to the heme o binding site. A helical membrane pass occupies residues 64 to 84 (MTTGISSIFVIVLAICAWIYM). At 85–92 (KNRRETKP) the chain is on the cytoplasmic side. A helical membrane pass occupies residues 93–113 (LAIIAVLFLIIQALMGMAAVV). The Extracellular segment spans residues 114-122 (WGQNPYIMA). Residues 123–143 (LHFGISIICYASIVLLALMIF) traverse the membrane as a helical segment. Position 124 (histidine 124) interacts with heme o. Residues 144-160 (EVDRKFDARNLVMGTKL) lie on the Cytoplasmic side of the membrane. Residues 161 to 181 (RINIYALTIYTYLAVYTGALV) form a helical membrane-spanning segment. At 182–212 (RHEKASMAVPVWPFENGHFIMPTSVQDYVQY) the chain is on the extracellular side. The helical transmembrane segment at 213-233 (FHRLAAFILIVWLLYVTWLVF) threads the bilayer. Residue histidine 214 coordinates heme b. Residues 234-240 (RDYRRYR) lie on the Cytoplasmic side of the membrane. The chain crosses the membrane as a helical span at residues 241 to 261 (VLTFSMVLSLVFIALQAVTGA). At 262–271 (LSVYTGVNLY) the chain is on the extracellular side. The helical transmembrane segment at 272 to 292 (IALAHSLIITMLFALLCYLCL) threads the bilayer. Histidine 276 contacts heme b. At 293–305 (LASRSKSNRLRIK) the chain is on the cytoplasmic side.

It belongs to the COX15/CtaA family. Type 1 subfamily. Interacts with CtaB. Heme b is required as a cofactor.

The protein resides in the cell membrane. The catalysed reaction is Fe(II)-heme o + 2 A + H2O = Fe(II)-heme a + 2 AH2. Its pathway is porphyrin-containing compound metabolism; heme A biosynthesis; heme A from heme O: step 1/1. Functionally, catalyzes the conversion of heme O to heme A by two successive hydroxylations of the methyl group at C8. The first hydroxylation forms heme I, the second hydroxylation results in an unstable dihydroxymethyl group, which spontaneously dehydrates, resulting in the formyl group of heme A. The sequence is that of Heme A synthase from Listeria monocytogenes serotype 4b (strain F2365).